Reading from the N-terminus, the 184-residue chain is Ribosome-recycling factor (184 aa).

It belongs to the RRF family.

Its subcellular location is the cytoplasm. Its function is as follows. Responsible for the release of ribosomes from messenger RNA at the termination of protein biosynthesis. May increase the efficiency of translation by recycling ribosomes from one round of translation to another. This Desulfotalea psychrophila (strain LSv54 / DSM 12343) protein is Ribosome-recycling factor.